Here is a 365-residue protein sequence, read N- to C-terminus: Patr class I histocompatibility antigen, A-126 alpha chain (365 aa).

A signal peptide spans 1-24; it reads MAVMAPRTLVLLLSGALALTQTWA. An alpha-1 region spans residues 25-114; the sequence is GSHSMRYFST…LRGYYNQSED (90 aa). The Extracellular segment spans residues 25-308; it reads GSHSMRYFST…EPSSQPTIPI (284 aa). N-linked (GlcNAc...) asparagine glycosylation is present at N110. Residues 115–206 are alpha-2; sequence GSHTIQLMFG…ENGKETLQRT (92 aa). 2 disulfides stabilise this stretch: C125/C188 and C227/C283. The interval 207–298 is alpha-3; the sequence is DPPKTHMTHH…GLPKPLTLRW (92 aa). Residues 209–295 enclose the Ig-like C1-type domain; that stretch reads PKTHMTHHPI…QHEGLPKPLT (87 aa). The connecting peptide stretch occupies residues 299–308; sequence EPSSQPTIPI. The chain crosses the membrane as a helical span at residues 309–332; it reads VGIIAGLVLLGAVITGAVVAAVMW. The Cytoplasmic portion of the chain corresponds to 333–365; the sequence is RRKSSDRKGGSYSQAASSDSAQGSDVSLTACKV. The tract at residues 338–365 is disordered; that stretch reads DRKGGSYSQAASSDSAQGSDVSLTACKV. Residues 342–359 show a composition bias toward low complexity; sequence GSYSQAASSDSAQGSDVS. Position 343 is a phosphoserine (S343). A Phosphotyrosine modification is found at Y344. 5 positions are modified to phosphoserine: S345, S349, S352, S356, and S359.

The protein belongs to the MHC class I family. As to quaternary structure, heterodimer of an alpha chain and a beta chain (beta-2-microglobulin).

It localises to the membrane. Involved in the presentation of foreign antigens to the immune system. In Pan troglodytes (Chimpanzee), this protein is Patr class I histocompatibility antigen, A-126 alpha chain (Patr-A).